The sequence spans 364 residues: Aminomethyltransferase (364 aa).

Belongs to the GcvT family. In terms of assembly, the glycine cleavage system is composed of four proteins: P, T, L and H.

The catalysed reaction is N(6)-[(R)-S(8)-aminomethyldihydrolipoyl]-L-lysyl-[protein] + (6S)-5,6,7,8-tetrahydrofolate = N(6)-[(R)-dihydrolipoyl]-L-lysyl-[protein] + (6R)-5,10-methylene-5,6,7,8-tetrahydrofolate + NH4(+). In terms of biological role, the glycine cleavage system catalyzes the degradation of glycine. This is Aminomethyltransferase from Shewanella putrefaciens (strain CN-32 / ATCC BAA-453).